The primary structure comprises 190 residues: Cytoglobin (190 aa).

The segment at 1–21 (MEKVPGDMEIERRERSEELSE) is disordered. Positions 18-167 (ELSEAERKAV…IYSHVTAAYK (150 aa)) constitute a Globin domain. Residues Cys38 and Cys83 are joined by a disulfide bond. 2 residues coordinate heme b: His81 and His113.

Belongs to the globin family. As to quaternary structure, monomeric. Homodimer; disulfide-linked in vitro. Also homooligomeric in vitro. The formation of an intramolecular disulfide bond between cysteines Cys-38 and Cys-83 specifically enhances the nitrite reductase activity. As to expression, expressed in brain and retina by non-neuronal cells (at protein level). This is the major globin expressed in vascular smooth muscle and is not present in the endothelium (at protein level).

It localises to the cytoplasm. Its subcellular location is the nucleus. It catalyses the reaction Fe(II)-heme b-[protein] + nitric oxide + O2 = Fe(III)-heme b-[protein] + nitrate. It carries out the reaction 2 superoxide + 2 H(+) = H2O2 + O2. The enzyme catalyses Fe(III)-heme b-[protein] + nitric oxide + H2O = Fe(II)-heme b-[protein] + nitrite + 2 H(+). The catalysed reaction is H2O2 + AH2 = A + 2 H2O. With respect to regulation, the nitric oxide dioxygenase activity is activated by a reducing system composed of cytochrome b5, its upstream reductase CYB5R3 and NADH. Probable multifunctional globin with a hexacoordinated heme iron required for the catalysis of various reactions depending on redox condition of the cell as well as oxygen availability. Has a nitric oxide dioxygenase (NOD) activity and is most probably involved in cell-mediated and oxygen-dependent nitric oxide consumption. By scavenging this second messenger may regulate several biological processes including endothelium-mediated vasodilation and vascular tone. Under normoxic conditions functions as a nitric oxide dioxygenase (NOD) but under hypoxic conditions the globin may switch its function to that of a nitrite (NO2) reductase (NiR), generating nitric oxide. Could also have peroxidase and superoxide dismutase activities, detoxifying reactive oxygen species and protecting cells against oxidative stress. Also binds dioxygen with low affinity and could function as an oxygen sensor but has probably no function as a respiratory oxygen carrier. This is Cytoglobin from Mus musculus (Mouse).